The following is a 69-amino-acid chain: Disintegrin VLO5B (69 aa).

Residues 1–66 (MNSANPCCDP…DCPRNPWKSE (66 aa)) form the Disintegrin domain. 4 disulfide bridges follow: Cys7/Cys30, Cys21/Cys27, Cys26/Cys51, and Cys39/Cys58. Residues 43 to 45 (MLD) carry the Cell attachment site; atypical (MLD) motif.

The protein belongs to the disintegrin family. Dimeric disintegrin subfamily. In terms of assembly, heterodimer with VLO5A; disulfide-linked. Expressed by the venom gland.

It localises to the secreted. In terms of biological role, poor inhibitor of platelet aggregation. The disintegrin inhibits the adhesion of the alpha-4/beta-1 (ITGA4/ITGB1) integrin to VCAM-1. Inhibition on alpha-2b/beta-3 (ITGA2B/ITGB3) is low. This is Disintegrin VLO5B from Macrovipera lebetina obtusa (Levant blunt-nosed viper).